The primary structure comprises 599 residues: Elongation factor 4 (599 aa).

The tr-type G domain occupies 2–185 (KYIRNFSIIA…RIIIDIPVPQ (184 aa)). Residues 14–19 (NHGKST) and 132–135 (NKID) each bind GTP.

It belongs to the TRAFAC class translation factor GTPase superfamily. Classic translation factor GTPase family. LepA subfamily.

The protein resides in the cell inner membrane. It carries out the reaction GTP + H2O = GDP + phosphate + H(+). Required for accurate and efficient protein synthesis under certain stress conditions. May act as a fidelity factor of the translation reaction, by catalyzing a one-codon backward translocation of tRNAs on improperly translocated ribosomes. Back-translocation proceeds from a post-translocation (POST) complex to a pre-translocation (PRE) complex, thus giving elongation factor G a second chance to translocate the tRNAs correctly. Binds to ribosomes in a GTP-dependent manner. The chain is Elongation factor 4 from Blochmanniella floridana.